Reading from the N-terminus, the 330-residue chain is tRNA dimethylallyltransferase (330 aa).

Positions 1 to 11 (MDYSHSDSPST) are enriched in polar residues. The tract at residues 1–21 (MDYSHSDSPSTAPAGKTPVDQ) is disordered. Residue 29-36 (GPTGAGKS) participates in ATP binding. A substrate-binding site is contributed by 31 to 36 (TGAGKS). The tract at residues 56-59 (DSMQ) is interaction with substrate tRNA.

Belongs to the IPP transferase family. In terms of assembly, monomer. It depends on Mg(2+) as a cofactor.

The enzyme catalyses adenosine(37) in tRNA + dimethylallyl diphosphate = N(6)-dimethylallyladenosine(37) in tRNA + diphosphate. Catalyzes the transfer of a dimethylallyl group onto the adenine at position 37 in tRNAs that read codons beginning with uridine, leading to the formation of N6-(dimethylallyl)adenosine (i(6)A). The protein is tRNA dimethylallyltransferase of Corynebacterium urealyticum (strain ATCC 43042 / DSM 7109).